A 221-amino-acid polypeptide reads, in one-letter code: Sugar transporter SWEET1 (221 aa).

7 consecutive transmembrane segments (helical) span residues 3–23 (AGGV…LGMF), 43–63 (QFLP…YGVL), 68–88 (TLII…LAYL), 102–122 (ATLL…VPDL), 129–149 (LGLF…ADLA), 160–180 (LSFS…IYGF), and 186–206 (YITV…GLFC). Positions 10–94 (FLSSACVLFT…LAYLHYSPQK (85 aa)) constitute a MtN3/slv 1 domain. One can recognise a MtN3/slv 2 domain in the interval 127-212 (QQLGLFCSVF…GLFCKYPPEQ (86 aa)). The tract at residues 149–221 (AKIVQTKSTQ…QDRKYRLLQT (73 aa)) is mediates interaction with TRPV2.

This sequence belongs to the SWEET sugar transporter family. In terms of assembly, interacts with TRPV2; the interaction probably occurs intracellularly and depends on TRPV2 N-glycosylation. As to expression, expressed at high levels in lung, placenta, spleen and thymus, at intermediate levels in brain, heart, kidney and testis, and at low levels in bone marrow, liver and lymph node. Within the thymus expression is highest in non-lymphoid cells.

The protein resides in the golgi apparatus membrane. It localises to the cell membrane. In terms of biological role, mediates sugar transport across membranes. May regulate the expression of RAG1 a gene involved in V(D)J recombination. The protein is Sugar transporter SWEET1 (Slc50a1) of Mus musculus (Mouse).